Here is a 406-residue protein sequence, read N- to C-terminus: Tryptophan synthase beta chain (406 aa).

Lysine 99 carries the N6-(pyridoxal phosphate)lysine modification.

The protein belongs to the TrpB family. In terms of assembly, tetramer of two alpha and two beta chains. Requires pyridoxal 5'-phosphate as cofactor.

It catalyses the reaction (1S,2R)-1-C-(indol-3-yl)glycerol 3-phosphate + L-serine = D-glyceraldehyde 3-phosphate + L-tryptophan + H2O. Its pathway is amino-acid biosynthesis; L-tryptophan biosynthesis; L-tryptophan from chorismate: step 5/5. Its function is as follows. The beta subunit is responsible for the synthesis of L-tryptophan from indole and L-serine. This Phenylobacterium zucineum (strain HLK1) protein is Tryptophan synthase beta chain.